The chain runs to 375 residues: Succinyl-diaminopimelate desuccinylase (375 aa).

His-66 provides a ligand contact to Zn(2+). Asp-68 is an active-site residue. Residue Asp-99 coordinates Zn(2+). Glu-133 serves as the catalytic Proton acceptor. Zn(2+) contacts are provided by Glu-134, Glu-162, and His-348.

The protein belongs to the peptidase M20A family. DapE subfamily. As to quaternary structure, homodimer. Zn(2+) is required as a cofactor. The cofactor is Co(2+).

It catalyses the reaction N-succinyl-(2S,6S)-2,6-diaminopimelate + H2O = (2S,6S)-2,6-diaminopimelate + succinate. The protein operates within amino-acid biosynthesis; L-lysine biosynthesis via DAP pathway; LL-2,6-diaminopimelate from (S)-tetrahydrodipicolinate (succinylase route): step 3/3. Functionally, catalyzes the hydrolysis of N-succinyl-L,L-diaminopimelic acid (SDAP), forming succinate and LL-2,6-diaminopimelate (DAP), an intermediate involved in the bacterial biosynthesis of lysine and meso-diaminopimelic acid, an essential component of bacterial cell walls. The chain is Succinyl-diaminopimelate desuccinylase from Photorhabdus laumondii subsp. laumondii (strain DSM 15139 / CIP 105565 / TT01) (Photorhabdus luminescens subsp. laumondii).